Consider the following 1199-residue polypeptide: Tubulin-specific chaperone D (1199 aa).

Disordered regions lie at residues 1-23 and 337-361; these read MALS…VEDA and QHSI…QDDV. Residues 14–23 are compositionally biased toward acidic residues; that stretch reads DPVEDPVEDA. HEAT repeat units lie at residues 368 to 406, 603 to 639, 757 to 793, and 1111 to 1147; these read VIEQ…ADDV, EHTA…ARSL, AAAQ…PAFF, and GDVR…VLTY.

Belongs to the TBCD family. Found in a complex with at least ARL2, PPP2CB, PPP2R1A, PPP2R2A, PPP2R5E and TBCD. Interacts with PPP2CB. Part of a supercomplex made of cofactors A to E. Cofactors A and D function by capturing and stabilizing tubulin in a quasi-native conformation. Cofactor E binds to the cofactor D-tubulin complex; interaction with cofactor C then causes the release of tubulin polypeptides that are committed to the native state. Interacts with ARL2; interaction is enhanced with the GDP-bound form of ARL2. Does not interact with ARL3, ARL4A and ARL4D. Interacts with beta tubulin. Interacts with TBCE.

The protein localises to the cell junction. Its subcellular location is the tight junction. It localises to the lateral cell membrane. It is found in the cytoplasm. The protein resides in the adherens junction. The protein localises to the cytoskeleton. Its subcellular location is the microtubule organizing center. It localises to the centrosome. Tubulin-folding protein implicated in the first step of the tubulin folding pathway and required for tubulin complex assembly. Involved in the regulation of microtubule polymerization or depolymerization, it modulates microtubule dynamics by capturing GTP-bound beta-tubulin (TUBB). Its ability to interact with beta tubulin is regulated via its interaction with ARL2. Acts as a GTPase-activating protein (GAP) for ARL2. Induces microtubule disruption in absence of ARL2. Increases degradation of beta tubulin, when overexpressed in polarized cells. Promotes epithelial cell detachment, a process antagonized by ARL2. Induces tight adherens and tight junctions disassembly at the lateral cell membrane. Required for correct assembly and maintenance of the mitotic spindle, and proper progression of mitosis. Involved in neuron morphogenesis. This chain is Tubulin-specific chaperone D (TBCD), found in Bos taurus (Bovine).